The sequence spans 871 residues: Translation initiation factor IF-2 (871 aa).

The tract at residues 1 to 242 (MVDTKNPGDK…PAAKPAPAKQ (242 aa)) is disordered. Low complexity predominate over residues 68-91 (PASARTPAAKAPPARAATPAAPRA). The span at 115 to 174 (AKVRAEEERRIAEAEAARRNSKEGIEQAEREAAEARRKAEEERHRQEEEAKRKAEIEAKR) shows a compositional bias: basic and acidic residues. 2 stretches are compositionally biased toward low complexity: residues 182–206 (KPAP…AVAA) and 225–241 (ARPV…APAK). The region spanning 367 to 538 (PRSPVVTVMG…SLQADLLDLK (172 aa)) is the tr-type G domain. The tract at residues 376-383 (GHVDHGKT) is G1. Residue 376 to 383 (GHVDHGKT) participates in GTP binding. A G2 region spans residues 401–405 (GITQH). The segment at 424 to 427 (DTPG) is G3. GTP contacts are provided by residues 424–428 (DTPGH) and 478–481 (NKID). The G4 stretch occupies residues 478–481 (NKID). Residues 514-516 (SAK) form a G5 region.

The protein belongs to the TRAFAC class translation factor GTPase superfamily. Classic translation factor GTPase family. IF-2 subfamily.

The protein resides in the cytoplasm. Functionally, one of the essential components for the initiation of protein synthesis. Protects formylmethionyl-tRNA from spontaneous hydrolysis and promotes its binding to the 30S ribosomal subunits. Also involved in the hydrolysis of GTP during the formation of the 70S ribosomal complex. In Nitrobacter winogradskyi (strain ATCC 25391 / DSM 10237 / CIP 104748 / NCIMB 11846 / Nb-255), this protein is Translation initiation factor IF-2.